The chain runs to 354 residues: Sulfate/thiosulfate import ATP-binding protein CysA (354 aa).

Residues 3–237 enclose the ABC transporter domain; it reads IEVRGLSKRF…PATPFVYGFL (235 aa). Residue 35–42 participates in ATP binding; the sequence is GPSGCGKT.

It belongs to the ABC transporter superfamily. Sulfate/tungstate importer (TC 3.A.1.6) family. The complex is composed of two ATP-binding proteins (CysA), two transmembrane proteins (CysT and CysW) and a solute-binding protein (CysP).

It is found in the cell inner membrane. It carries out the reaction sulfate(out) + ATP + H2O = sulfate(in) + ADP + phosphate + H(+). The enzyme catalyses thiosulfate(out) + ATP + H2O = thiosulfate(in) + ADP + phosphate + H(+). Part of the ABC transporter complex CysAWTP involved in sulfate/thiosulfate import. Responsible for energy coupling to the transport system. In Bordetella parapertussis (strain 12822 / ATCC BAA-587 / NCTC 13253), this protein is Sulfate/thiosulfate import ATP-binding protein CysA.